The chain runs to 837 residues: V-type proton ATPase 116 kDa subunit a 1 (837 aa).

The Cytoplasmic segment spans residues 1 to 388 (MGELFRSEEM…DAYGIGTYRE (388 aa)). A phosphothreonine mark is found at Thr-250 and Thr-360. Tyr-364 is subject to Phosphotyrosine. The helical transmembrane segment at 389–407 (INPAPYTIITFPFLFAVMF) threads the bilayer. Topologically, residues 408–409 (GD) are vacuolar. Residues 410–426 (FGHGILMTLFAVWMVLR) form a helical membrane-spanning segment. Residues 427 to 441 (ESRILSQKNENEMFS) lie on the Cytoplasmic side of the membrane. A helical transmembrane segment spans residues 442–471 (TVFSGRYIILLMGVFSMYTGLIYNDCFSKS). The Vacuolar segment spans residues 472–534 (LNIFGSSWSV…ATNKLTFLNS (63 aa)). The N-linked (GalNAc...) asparagine glycan is linked to Asn-488. The helical transmembrane segment at 535–554 (FKMKMSVILGIIHMLFGVSL) threads the bilayer. The Cytoplasmic segment spans residues 555 to 572 (SLFNHIYFKKPLNIYFGF). Residues 573–593 (IPEIIFMTSLFGYLVILIFYK) traverse the membrane as a helical segment. At 594-638 (WTAYDAHTSENAPSLLIHFINMFLFSYPESGYSMLYSGQKGIQCF) the chain is on the vacuolar side. Residues 639–658 (LVVVALLCVPWMLLFKPLVL) form a helical membrane-spanning segment. Topologically, residues 659–724 (RRQYLRRKHL…DTMVHQAIHT (66 aa)) are cytoplasmic. A helical membrane pass occupies residues 725 to 749 (IEYCLGCISNTASYLRLWALSLAHA). Residues 750–770 (QLSEVLWTMVIHIGLSVKSLA) are Vacuolar-facing. Residues 771–809 (GGLVLFFFFTAFATLTVAILLIMEGLSAFLHALRLHWVE) form a helical membrane-spanning segment. The Cytoplasmic segment spans residues 810–837 (FQNKFYSGTGFKFLPFSFEHIREGKFEE).

This sequence belongs to the V-ATPase 116 kDa subunit family. As to quaternary structure, V-ATPase is a heteromultimeric enzyme made up of two complexes: the ATP-hydrolytic V1 complex and the proton translocation V0 complex. The V1 complex consists of three catalytic AB heterodimers that form a heterohexamer, three peripheral stalks each consisting of EG heterodimers, one central rotor including subunits D and F, and the regulatory subunits C and H. The proton translocation complex V0 consists of the proton transport subunit a, a ring of proteolipid subunits c9c'', rotary subunit d, subunits e and f, and the accessory subunits ATP6AP1/Ac45 and ATP6AP2/PRR. Interacts with SPAAR.

Its subcellular location is the cytoplasmic vesicle. It localises to the clathrin-coated vesicle membrane. It is found in the secretory vesicle. The protein localises to the synaptic vesicle membrane. The protein resides in the melanosome. Subunit of the V0 complex of vacuolar(H+)-ATPase (V-ATPase), a multisubunit enzyme composed of a peripheral complex (V1) that hydrolyzes ATP and a membrane integral complex (V0) that transports protons across cellular membranes. V-ATPase is responsible for the acidification of various organelles, such as lysosomes, endosomes, the trans-Golgi network, and secretory granules, including synaptic vesicles. In certain cell types, can be exported to the plasma membrane, where it is involved in the acidification of the extracellular environment. Required for assembly and activity of the vacuolar ATPase. Through its action on compartment acidification, plays an essential role in neuronal development in terms of integrity and connectivity of neurons. In Homo sapiens (Human), this protein is V-type proton ATPase 116 kDa subunit a 1 (ATP6V0A1).